A 556-amino-acid chain; its full sequence is Arginine--tRNA ligase (556 aa).

A 'HIGH' region motif is present at residues 133–143 (ANPTGPIHIGH).

Belongs to the class-I aminoacyl-tRNA synthetase family. In terms of assembly, monomer.

It localises to the cytoplasm. It carries out the reaction tRNA(Arg) + L-arginine + ATP = L-arginyl-tRNA(Arg) + AMP + diphosphate. The chain is Arginine--tRNA ligase from Dehalococcoides mccartyi (strain CBDB1).